The primary structure comprises 736 residues: Gingipain R2 (736 aa).

Residues 1 to 24 (MKKNFSRIVSIVAFSSLLGGMAFA) form the signal peptide. Positions 25–229 (QPAERGRNPQ…SVFMNYEATR (205 aa)) are excised as a propeptide. D307, V329, D332, Y334, E336, E390, and H395 together coordinate Ca(2+). Residue H440 is the Proton donor of the active site. Residue C473 is the Nucleophile of the active site. F478, E487, D521, E522, E525, H531, D613, and E639 together coordinate Ca(2+).

It belongs to the peptidase C25 family.

It is found in the secreted. The catalysed reaction is Hydrolysis of proteins and small molecule substrates, with a preference for Arg in P1.. Its activity is regulated as follows. Inhibited by human histatin-3 1/24 (histatin-5). Functionally, thiol protease. Acts synergistically with RgpA to catalyze the maturation of fimbrial subunits, such as FimA. Its proteolytic activity is a major factor in both periodontal tissue destruction and in evasion of host defense mechanisms. The polypeptide is Gingipain R2 (rgpB) (Porphyromonas gingivalis (strain ATCC BAA-308 / W83)).